The sequence spans 330 residues: Probable xanthine dehydrogenase subunit A (330 aa).

Could be composed of four subunits: PucA, PucC, PucD and PucE.

The catalysed reaction is xanthine + NAD(+) + H2O = urate + NADH + H(+). It carries out the reaction hypoxanthine + NAD(+) + H2O = xanthine + NADH + H(+). It functions in the pathway purine metabolism; hypoxanthine degradation; urate from hypoxanthine: step 1/2. It participates in purine metabolism; hypoxanthine degradation; urate from hypoxanthine: step 2/2. Its function is as follows. Oxidizes hypoxanthine and xanthine to uric acid. PucA subunit could exert a molybdenum cofactor recruiting function. The polypeptide is Probable xanthine dehydrogenase subunit A (pucA) (Bacillus subtilis (strain 168)).